We begin with the raw amino-acid sequence, 326 residues long: Fructose-1,6-bisphosphatase class 1 2 (326 aa).

Positions 84, 103, 105, and 106 each coordinate Mg(2+). Substrate contacts are provided by residues 106–109 (DGSS), asparagine 198, and lysine 262. Glutamate 268 is a Mg(2+) binding site.

It belongs to the FBPase class 1 family. Homotetramer. Mg(2+) is required as a cofactor.

The protein localises to the cytoplasm. It catalyses the reaction beta-D-fructose 1,6-bisphosphate + H2O = beta-D-fructose 6-phosphate + phosphate. It participates in carbohydrate biosynthesis; gluconeogenesis. This is Fructose-1,6-bisphosphatase class 1 2 from Pseudoalteromonas translucida (strain TAC 125).